The chain runs to 160 residues: MGVTKKPDLTDPVLRAKLAKGMGHNYYGEPAWPNDLLYMFPVVILGTIACNVGLAVLEPSLVGEPANPFATPLEILPEWYFFPVFQILRTVPNKLLGVLLMAAVPAGLLTVPFIENVNKFQNPFRRPVATTVFLIGTVVAIWLGIGATLPIDTSLTLGLF.

A run of 3 helical transmembrane segments spans residues 36-56, 95-115, and 131-151; these read LLYM…GLAV, LLGV…PFIE, and TVFL…TLPI.

This sequence belongs to the cytochrome b family. PetD subfamily. In terms of assembly, the 4 large subunits of the cytochrome b6-f complex are cytochrome b6, subunit IV (17 kDa polypeptide, petD), cytochrome f and the Rieske protein, while the 4 small subunits are petG, petL, petM and petN. The complex functions as a dimer.

It is found in the plastid. It localises to the chloroplast thylakoid membrane. Its function is as follows. Component of the cytochrome b6-f complex, which mediates electron transfer between photosystem II (PSII) and photosystem I (PSI), cyclic electron flow around PSI, and state transitions. The chain is Cytochrome b6-f complex subunit 4 from Coleochaete orbicularis (Charophycean green alga).